Here is an 807-residue protein sequence, read N- to C-terminus: Glycerol-3-phosphate acyltransferase (807 aa).

The short motif at 305–310 (CHRSHM) is the HXXXXD motif element.

The protein belongs to the GPAT/DAPAT family.

The protein localises to the cell inner membrane. It catalyses the reaction sn-glycerol 3-phosphate + an acyl-CoA = a 1-acyl-sn-glycero-3-phosphate + CoA. The protein operates within phospholipid metabolism; CDP-diacylglycerol biosynthesis; CDP-diacylglycerol from sn-glycerol 3-phosphate: step 1/3. The polypeptide is Glycerol-3-phosphate acyltransferase (Aliivibrio salmonicida (strain LFI1238) (Vibrio salmonicida (strain LFI1238))).